Here is a 46-residue protein sequence, read N- to C-terminus: Defensin-like protein 2 (46 aa).

4 cysteine pairs are disulfide-bonded: cysteine 3–cysteine 46, cysteine 13–cysteine 33, cysteine 19–cysteine 40, and cysteine 23–cysteine 42.

In terms of assembly, monomer. Present in seeds, cotyledons and leaves. Not found in roots or stems.

Has antibacterial activity against the Gram-positive bacterium S.aureus and the Gram-negative bacteria E.coli and P.syringae. Does not have antibacterial activity against the phytopathogenic bacteria R.solanacearum, Rhataybacter sp and Erwinia sp. Does not inhibit trypsin, chymotrypsin or alpha-amylases. This is Defensin-like protein 2 from Vigna unguiculata (Cowpea).